The sequence spans 144 residues: MLDIKKIKEILPHRYPFLLVDRVISVEEGKKVTAIKNVTANEEFFNGHFPEYPVMPGVLIVEALAQTSGIAMMQSEANKGKIGLFAGIDGCRFKRQVIPGDQLLLEAEITRMRGAIAKAKVKATVEGDLVCEAEIMFALSDLPK.

Residue His48 is part of the active site.

Belongs to the thioester dehydratase family. FabZ subfamily.

The protein localises to the cytoplasm. It catalyses the reaction a (3R)-hydroxyacyl-[ACP] = a (2E)-enoyl-[ACP] + H2O. Functionally, involved in unsaturated fatty acids biosynthesis. Catalyzes the dehydration of short chain beta-hydroxyacyl-ACPs and long chain saturated and unsaturated beta-hydroxyacyl-ACPs. The polypeptide is 3-hydroxyacyl-[acyl-carrier-protein] dehydratase FabZ (Listeria welshimeri serovar 6b (strain ATCC 35897 / DSM 20650 / CCUG 15529 / CIP 8149 / NCTC 11857 / SLCC 5334 / V8)).